We begin with the raw amino-acid sequence, 538 residues long: Phosphoenolpyruvate carboxykinase (ATP) (538 aa).

Substrate contacts are provided by arginine 64, tyrosine 205, and lysine 211. Residues lysine 211, histidine 230, and 246 to 254 (GLSGTGKTT) contribute to the ATP site. 2 residues coordinate Mn(2+): lysine 211 and histidine 230. Aspartate 267 lines the Mn(2+) pocket. Residues glutamate 295, arginine 331, 447–448 (RI), and threonine 453 each bind ATP. Arginine 331 lines the substrate pocket.

The protein belongs to the phosphoenolpyruvate carboxykinase (ATP) family. As to quaternary structure, monomer. The cofactor is Mn(2+).

It localises to the cytoplasm. It catalyses the reaction oxaloacetate + ATP = phosphoenolpyruvate + ADP + CO2. Its pathway is carbohydrate biosynthesis; gluconeogenesis. Its function is as follows. Involved in the gluconeogenesis. Catalyzes the conversion of oxaloacetate (OAA) to phosphoenolpyruvate (PEP) through direct phosphoryl transfer between the nucleoside triphosphate and OAA. The protein is Phosphoenolpyruvate carboxykinase (ATP) of Histophilus somni (strain 129Pt) (Haemophilus somnus).